Here is a 1889-residue protein sequence, read N- to C-terminus: Bromodomain adjacent to zinc finger domain protein 2A (1889 aa).

Disordered stretches follow at residues 1-59 (MEME…NGLS), 384-433 (FGLN…SPAA), and 479-526 (TTPV…GAVA). Over residues 35–59 (TNGSPMNFPQQGKSLNGDVNVNGLS) the composition is skewed to polar residues. Residues 332 to 726 (EGNPVISALD…ESQTPVQGQA (395 aa)) form a required for TTF1 binding region. A compositionally biased stretch (low complexity) spans 423-433 (PAVSPTASPAA). Composition is skewed to polar residues over residues 479–489 (TTPVTSPQGSP) and 498–509 (QTVSPARKNVSS). Residue T499 is modified to Phosphothreonine. Position 501 is a phosphoserine (S501). The MBD domain maps to 538-609 (IATPEEVRLP…EHFSFSPRMP (72 aa)). A Phosphothreonine modification is found at T540. At S605 the chain carries Phosphoserine. Residues 638–791 (QAITGKRGRP…ARPSCRADKT (154 aa)) are disordered. DNA-binding regions (a.T hook) lie at residues 641 to 653 (TGKRGRPRNNEKA) and 662 to 674 (KRGRGRPPKIKMP). Residues 648–660 (RNNEKAKNKEVPK) show a composition bias toward basic and acidic residues. Over residues 661–670 (VKRGRGRPPK) the composition is skewed to basic residues. Residue K672 is modified to N6-acetyllysine; by KAT8. The segment covering 678 to 701 (NKTDNRLPKKLETQEILSEDDKAK) has biased composition (basic and acidic residues). Residues 686-813 (KKLETQEILS…QQAILEEMKK (128 aa)) are a coiled coil. Residues 702-713 (MTKNKKKMRQKV) are compositionally biased toward basic residues. The segment covering 716–726 (GESQTPVQGQA) has biased composition (polar residues). 2 stretches are compositionally biased toward basic and acidic residues: residues 731 to 740 (KQDTKSLKQK) and 748 to 791 (AEKE…ADKT). N6-acetyllysine is present on K790. One can recognise a DDT domain in the interval 839 to 904 (SRAFSDCLTI…LKAALHDPGL (66 aa)). Residue K857 forms a Glycyl lysine isopeptide (Lys-Gly) (interchain with G-Cter in SUMO2) linkage. A disordered region spans residues 1039-1063 (EETSGIEEEEEEENTTAVHGRRGRK). S1042 bears the Phosphoserine mark. Positions 1042-1052 (SGIEEEEEEEN) are enriched in acidic residues. Residues K1141 and K1163 each participate in a glycyl lysine isopeptide (Lys-Gly) (interchain with G-Cter in SUMO2) cross-link. 2 disordered regions span residues 1147 to 1247 (LMEV…GQSQ) and 1269 to 1397 (LSSS…GRPP). At S1174 the chain carries Phosphoserine. Residues 1176-1188 (ARSRGRPRKPKPG) constitute a DNA-binding region (a.T hook 3). Polar residues-rich tracts occupy residues 1190–1231 (LQPQ…QPSS), 1269–1278 (LSSSVLTPDS), and 1331–1346 (DQPTPSLQLLASSKPM). A phosphoserine mark is found at S1374, S1377, and S1383. The segment at residues 1390–1402 (PKRRGRPPSKFFK) is a DNA-binding region (a.T hook 4). A Phosphoserine modification is found at S1545. Glycyl lysine isopeptide (Lys-Gly) (interchain with G-Cter in SUMO2) cross-links involve residues K1662 and K1695. The segment at 1662–1712 (KVTCLVCRKGDNDEFLLLCDGCDRGCHIYCHRPKMEAVPEGDWFCAVCLSQ) adopts a PHD-type zinc-finger fold. Residues 1720–1778 (QRPGFPKRGQKRKSSFPLTFPEGDSRRRMLSRSRDSPAVPRYPEDGLSPPKRRRHSMRS) form a disordered region. S1733 is modified (phosphoserine). Position 1738 is a phosphothreonine (T1738). Residues 1742–1754 (GDSRRRMLSRSRD) show a composition bias toward basic and acidic residues. 2 positions are modified to phosphoserine: S1755 and S1767. The segment covering 1769-1778 (PKRRRHSMRS) has biased composition (basic residues). Positions 1777 to 1881 (RSHHSDLTFC…RFFESRWEEF (105 aa)) constitute a Bromo domain.

This sequence belongs to the WAL family. In terms of assembly, component of the NoRC-1 ISWI chromatin remodeling complex at least composed of SMARCA1 and BAZ2A/TIP5, which regulates the spacing of histone octamers on the DNA template to facilitate access to DNA. Within the NoRC-1 ISWI chromatin remodeling complex interacts with SMARCA1; the interaction is direct. Component of the NoRC-5 ISWI chromatin remodeling complex (also called the NoRC nucleolar-remodeling complex), at least composed of SMARCA5/SNF2H and BAZ2A/TIP5, which regulates the spacing of histone octamers on the DNA template to facilitate access to DNA. Within the NoRC-5 ISWI chromatin remodeling complexes interacts with SMARCA5/SNF2H; the interaction is direct. Interacts with TTF1; the interaction is required for recruitment of the NoRC-5 ISWI chromatin remodeling complex to rDNA. Interacts with HDAC1. Interacts with SIN3A. Interacts with DNMT1 and DNM3B. Interacts with BEND3 and USP21. In terms of processing, ubiquitinated. Deubiquitinated by USP21 leading to its stabilization. Post-translationally, acetylation at Lys-672 by KAT8/MOF promotes its dissociation from pRNA, affecting heterochromatin formation, nucleosome positioning and rDNA silencing. Deacetylation by SIRT1 in late S phase enhances pRNA-binding, allowing de novo DNA methylation and heterochromatin formation. Acetylation is high during S phase and declines to background levels in late S phase when the silent copies of rRNA genes are replicated.

The protein localises to the nucleus. Its subcellular location is the nucleolus. Regulatory subunit of the ATP-dependent NoRC-1 and NoRC-5 ISWI chromatin remodeling complexes, which form ordered nucleosome arrays on chromatin and facilitate access to DNA during DNA-templated processes such as DNA replication, transcription, and repair. Both complexes regulate the spacing of nucleosomes along the chromatin and have the ability to slide mononucleosomes to the center of a DNA template. Directly stimulates the ATPase activity of SMARCA5 in the NoRC-5 ISWI chromatin remodeling complex. The NoRC-1 ISWI chromatin remodeling complex has a lower ATP hydrolysis rate than the NoRC-5 ISWI chromatin remodeling complex. Within the NoRC-5 ISWI chromatin remodeling complex, mediates silencing of a fraction of rDNA by recruiting histone-modifying enzymes and DNA methyltransferases, leading to heterochromatin formation and transcriptional silencing. In the complex, it plays a central role by being recruited to rDNA and by targeting chromatin modifying enzymes such as HDAC1, leading to repress RNA polymerase I transcription. Recruited to rDNA via its interaction with TTF1 and its ability to recognize and bind histone H4 acetylated on 'Lys-16' (H4K16ac), leading to deacetylation of H4K5ac, H4K8ac, H4K12ac but not H4K16ac. Specifically binds pRNAs, 150-250 nucleotide RNAs that are complementary in sequence to the rDNA promoter; pRNA-binding is required for heterochromatin formation and rDNA silencing. In Mus musculus (Mouse), this protein is Bromodomain adjacent to zinc finger domain protein 2A (Baz2a).